An 882-amino-acid polypeptide reads, in one-letter code: Alanine--tRNA ligase (882 aa).

Histidine 576, histidine 580, cysteine 678, and histidine 682 together coordinate Zn(2+).

Belongs to the class-II aminoacyl-tRNA synthetase family. Requires Zn(2+) as cofactor.

It is found in the cytoplasm. It catalyses the reaction tRNA(Ala) + L-alanine + ATP = L-alanyl-tRNA(Ala) + AMP + diphosphate. Functionally, catalyzes the attachment of alanine to tRNA(Ala) in a two-step reaction: alanine is first activated by ATP to form Ala-AMP and then transferred to the acceptor end of tRNA(Ala). Also edits incorrectly charged Ser-tRNA(Ala) and Gly-tRNA(Ala) via its editing domain. The polypeptide is Alanine--tRNA ligase (Anaplasma marginale (strain St. Maries)).